A 237-amino-acid polypeptide reads, in one-letter code: Ribonuclease PH (237 aa).

Residues Arg-86 and 124 to 126 (GTR) each bind phosphate.

The protein belongs to the RNase PH family. As to quaternary structure, homohexameric ring arranged as a trimer of dimers.

It catalyses the reaction tRNA(n+1) + phosphate = tRNA(n) + a ribonucleoside 5'-diphosphate. Its function is as follows. Phosphorolytic 3'-5' exoribonuclease that plays an important role in tRNA 3'-end maturation. Removes nucleotide residues following the 3'-CCA terminus of tRNAs; can also add nucleotides to the ends of RNA molecules by using nucleoside diphosphates as substrates, but this may not be physiologically important. Probably plays a role in initiation of 16S rRNA degradation (leading to ribosome degradation) during starvation. The chain is Ribonuclease PH from Shewanella loihica (strain ATCC BAA-1088 / PV-4).